Reading from the N-terminus, the 85-residue chain is Large ribosomal subunit protein bL27 (85 aa).

A disordered region spans residues 1–20 (MAHKKAGGSTRNGRDSEAKR).

Belongs to the bacterial ribosomal protein bL27 family.

This chain is Large ribosomal subunit protein bL27, found in Enterobacter sp. (strain 638).